The following is a 226-amino-acid chain: DNA mismatch repair protein MutH (226 aa).

Belongs to the MutH family.

It is found in the cytoplasm. Its function is as follows. Sequence-specific endonuclease that cleaves unmethylated GATC sequences. It is involved in DNA mismatch repair. In Actinobacillus pleuropneumoniae serotype 5b (strain L20), this protein is DNA mismatch repair protein MutH.